The following is a 234-amino-acid chain: Large ribosomal subunit protein uL1 (234 aa).

It belongs to the universal ribosomal protein uL1 family. In terms of assembly, part of the 50S ribosomal subunit.

Binds directly to 23S rRNA. The L1 stalk is quite mobile in the ribosome, and is involved in E site tRNA release. Functionally, protein L1 is also a translational repressor protein, it controls the translation of the L11 operon by binding to its mRNA. This chain is Large ribosomal subunit protein uL1, found in Pseudoalteromonas translucida (strain TAC 125).